The sequence spans 289 residues: Formamidopyrimidine-DNA glycosylase 1 (289 aa).

P2 serves as the catalytic Schiff-base intermediate with DNA. Residue E3 is the Proton donor of the active site. The Proton donor; for beta-elimination activity role is filled by K61. DNA contacts are provided by H100, R119, and K165. An FPG-type zinc finger spans residues 251 to 285 (DAYGREGENCRRCGAVIRRERFMNRSSFYCPRCQP). R275 acts as the Proton donor; for delta-elimination activity in catalysis.

The protein belongs to the FPG family. In terms of assembly, monomer. Requires Zn(2+) as cofactor.

It catalyses the reaction Hydrolysis of DNA containing ring-opened 7-methylguanine residues, releasing 2,6-diamino-4-hydroxy-5-(N-methyl)formamidopyrimidine.. The catalysed reaction is 2'-deoxyribonucleotide-(2'-deoxyribose 5'-phosphate)-2'-deoxyribonucleotide-DNA = a 3'-end 2'-deoxyribonucleotide-(2,3-dehydro-2,3-deoxyribose 5'-phosphate)-DNA + a 5'-end 5'-phospho-2'-deoxyribonucleoside-DNA + H(+). Its function is as follows. Involved in base excision repair of DNA damaged by oxidation or by mutagenic agents. Acts as a DNA glycosylase that recognizes and removes damaged bases. Has a preference for oxidized purines, such as 7,8-dihydro-8-oxoguanine (8-oxoG) when paired with C, G or T, as well as methyl-faPy (formanidopyrimidine residues) in poly(dG-dC) and spiroiminodihydantoin:C base pairs. Unlike its E.coli ortholog has no activity on 8-oxoG:A. Has AP (apurinic/apyrimidinic) lyase activity and introduces nicks in the DNA strand. Cleaves the DNA backbone by beta-delta elimination to generate a single-strand break at the site of the removed base with both 3'- and 5'-phosphates. Cleaves ssDNA containing an AP site. Complements the H(2)O(2) sensitivity of an M.smegmatis fpg disruption mutant; upon expression in M.smegmatis excises 8-oxoG from dsDNA. The polypeptide is Formamidopyrimidine-DNA glycosylase 1 (fpg1) (Mycobacterium tuberculosis (strain ATCC 25618 / H37Rv)).